We begin with the raw amino-acid sequence, 157 residues long: MIVLGIDPALGSLGWAVVARQLTKLKYLASGIIKTNSKDEIHNRLACINSTLEKVILEYQPNMAAIEETFVNTNSVTSLKLGYARGAIMSLCGRYNLDIREFKPNTVKKTVTGYGHAEKDQILHMIKLLLPGTSLITNSDEADAIAIAYTCHVMRVK.

Catalysis depends on residues D7, E67, and D140. The Mg(2+) site is built by D7, E67, and D140.

It belongs to the RuvC family. In terms of assembly, homodimer which binds Holliday junction (HJ) DNA. The HJ becomes 2-fold symmetrical on binding to RuvC with unstacked arms; it has a different conformation from HJ DNA in complex with RuvA. In the full resolvosome a probable DNA-RuvA(4)-RuvB(12)-RuvC(2) complex forms which resolves the HJ. Mg(2+) is required as a cofactor.

It localises to the cytoplasm. It carries out the reaction Endonucleolytic cleavage at a junction such as a reciprocal single-stranded crossover between two homologous DNA duplexes (Holliday junction).. In terms of biological role, the RuvA-RuvB-RuvC complex processes Holliday junction (HJ) DNA during genetic recombination and DNA repair. Endonuclease that resolves HJ intermediates. Cleaves cruciform DNA by making single-stranded nicks across the HJ at symmetrical positions within the homologous arms, yielding a 5'-phosphate and a 3'-hydroxyl group; requires a central core of homology in the junction. The consensus cleavage sequence is 5'-(A/T)TT(C/G)-3'. Cleavage occurs on the 3'-side of the TT dinucleotide at the point of strand exchange. HJ branch migration catalyzed by RuvA-RuvB allows RuvC to scan DNA until it finds its consensus sequence, where it cleaves and resolves the cruciform DNA. The chain is Crossover junction endodeoxyribonuclease RuvC from Rickettsia akari (strain Hartford).